We begin with the raw amino-acid sequence, 206 residues long: High frequency lysogenization protein HflD homolog (206 aa).

It belongs to the HflD family.

It is found in the cytoplasm. The protein resides in the cell inner membrane. This Pseudomonas syringae pv. syringae (strain B728a) protein is High frequency lysogenization protein HflD homolog.